The primary structure comprises 1682 residues: Sodium channel protein type 7 subunit alpha (1682 aa).

At 1 to 117 (MLASPEPKGL…RRTTIKVLVH (117 aa)) the chain is on the cytoplasmic side. One copy of the I repeat lies at 100 to 401 (TLSPFNCIRR…ILAMAYEEEK (302 aa)). Residues 118 to 137 (PFFQLFILISVLIDCVFMSL) traverse the membrane as a helical segment. Residues 138–141 (TNLP) are Extracellular-facing. Residues 142 to 167 (KWRPVLENTLLGIYTFEILVKLFARG) traverse the membrane as a helical segment. The Cytoplasmic portion of the chain corresponds to 168 to 178 (VWAGSFSFLGD). The helical transmembrane segment at 179–196 (PWNWLDFSVTVFEVIIRY) threads the bilayer. Topologically, residues 197-200 (SPLD) are extracellular. Residues 201–219 (FIPTLQTARTLRILKIIPL) traverse the membrane as a helical segment. Residues 220–237 (NQGLKSLVGVLIHCLKQL) are Cytoplasmic-facing. Residues 238–259 (IGVIILTLFFLSIFSLIGMGLF) traverse the membrane as a helical segment. Over 260–338 (MGNLKHKCFR…PDQGFTNFDS (79 aa)) the chain is Extracellular. Cys-267 and Cys-307 form a disulfide bridge. Residues Asn-276, Asn-281, and Asn-309 are each glycosylated (N-linked (GlcNAc...) asparagine). The pore-forming intramembrane region spans 339 to 366 (FGWALFALFRLMAQDYPEVLYHQILYAS). Gly-367 is a topological domain (extracellular). The chain crosses the membrane as a helical span at residues 368–407 (KVYMIFFVVVSFLFSFYMASLFLGILAMAYEEEKQRVGEI). Residues 408–505 (SKKIEPKFQQ…EFVHRIIMAP (98 aa)) lie on the Cytoplasmic side of the membrane. Ser-442 bears the Phosphoserine; by PKA mark. The II repeat unit spans residues 487 to 758 (CSPCWLKLKE…QLAVARIKKG (272 aa)). The helical transmembrane segment at 506–521 (FTDLFLIICIILNVCF) threads the bilayer. At 522–530 (LTLEHYPMS) the chain is on the extracellular side. Residues 531-559 (KQTNTLLNIGNLVFIGIFTAEMIFKIIAM) traverse the membrane as a helical segment. The Cytoplasmic segment spans residues 560–568 (HPYGYFQVG). A helical membrane pass occupies residues 569–586 (WNIFDSMIVFHGLIELCL). At 587–592 (ANVAGM) the chain is on the extracellular side. A helical transmembrane segment spans residues 593–609 (ALLRLFRMLRIFKLGKY). At 610–626 (WPTFQILMWSLSNSWVA) the chain is on the cytoplasmic side. A helical membrane pass occupies residues 627 to 655 (LKDLVLLLFTFIFFSAAFGMKLFGKNYEE). At 656 to 673 (FVCHIDKDCQLPRWHMHD) the chain is on the extracellular side. 2 disulfide bridges follow: Cys-658/Cys-664 and Cys-696/Cys-705. Residues 674-700 (FFHSFLNVFRILCGEWVETLWDCMEVA) constitute an intramembrane region (pore-forming). A topological domain (extracellular) is located at residue Gly-701. The chain crosses the membrane as a helical span at residues 702 to 732 (QSWCIPFYLMVILIGNLLVLYLFLALVSSFS). Topologically, residues 733–934 (SCKDVTAEEN…KTCCKIVENN (202 aa)) are cytoplasmic. The residue at position 777 (Thr-777) is a Phosphothreonine; by PKA. The segment at 801-871 (TQDFLKDKEK…SKEKIKQSSS (71 aa)) is disordered. The segment covering 804–819 (FLKDKEKSSGTEKNAT) has biased composition (basic and acidic residues). Residues 820 to 834 (ENESQSLIPSPSVSE) show a composition bias toward polar residues. At Ser-843 the chain carries Phosphoserine. 2 positions are modified to phosphoserine; by PKA: Ser-869 and Ser-905. Residues 916-1224 (KGKIWQNIRK…RKQYRRLKKL (309 aa)) form an III repeat. The chain crosses the membrane as a helical span at residues 935–953 (WFKCFIGLVTLLSTGTLAF). Over 954–961 (EDIYMDQR) the chain is Extracellular. Residues 962–990 (KTIKILLEYADMIFTYIFILEMLLKWMAY) form a helical membrane-spanning segment. Topologically, residues 991 to 998 (GFKAYFSN) are cytoplasmic. The chain crosses the membrane as a helical span at residues 999–1020 (GWYRLDFVVVIVFCLSLIGKTR). Residue Glu-1021 is a topological domain, extracellular. The chain crosses the membrane as a helical span at residues 1022–1040 (ELKPLISMKFLRPLRVLSQ). Residues 1041-1055 (FERMKVVVRALIKTT) are Cytoplasmic-facing. The helical transmembrane segment at 1056–1080 (LPTLNVFLVCLMIWLIFSIMGVDLF) threads the bilayer. Over 1081 to 1127 (AGRFYECIDPTSGERFPSSEVMNKSRCESLLFNESMLWENAKMNFDN) the chain is Extracellular. Cys-1087 and Cys-1107 form a disulfide bridge. Residues Asn-1103 and Asn-1113 are each glycosylated (N-linked (GlcNAc...) asparagine). The pore-forming intramembrane region spans 1128-1154 (VGNGFLSLLQVATFNGWITIMNSAIDS). Residues 1155–1167 (VAVNIQPHFEVNI) lie on the Extracellular side of the membrane. A helical membrane pass occupies residues 1168 to 1202 (YMYCYFINFIIFGVFLPLSMLITVIIDNFNKHKIK). The Cytoplasmic segment spans residues 1203 to 1250 (LGGSNIFITVKQRKQYRRLKKLMYEDSQRPVPRPLNKLQGFIFDVVTS). An IV repeat occupies 1233 to 1531 (VPRPLNKLQG…WKRFDPDRTQ (299 aa)). The helical transmembrane segment at 1251–1272 (QAFNVIVMVLICFQAIAMMIDT) threads the bilayer. The Extracellular segment spans residues 1273 to 1276 (DVQS). The chain crosses the membrane as a helical span at residues 1277 to 1305 (LQMSIALYWINSIFVMLYTMECILKLIAF). At 1306–1312 (RCFYFTI) the chain is on the cytoplasmic side. Residues 1313 to 1338 (AWNIFDFMVVIFSITGLCLPMTVGSY) traverse the membrane as a helical segment. Over 1339-1341 (LVP) the chain is Extracellular. A helical membrane pass occupies residues 1342–1362 (PSLVQLILLSRIIHMLRLGKG). Topologically, residues 1363 to 1377 (PKVFHNLMLPLMLSL) are cytoplasmic. Residues 1378–1402 (PALLNIILLIFLVMFIYAVFGMYNF) form a helical membrane-spanning segment. At 1403 to 1420 (AYVKKEAGINDVSNFETF) the chain is on the extracellular side. Residues 1421–1444 (GNSMLCLFQVAIFAGWDGMLDAIF) constitute an intramembrane region (pore-forming). Residues 1445–1468 (NSKWSDCDPDKINPGTQVRGDCGN) are Extracellular-facing. Cys-1451 and Cys-1466 are disulfide-bonded. The chain crosses the membrane as a helical span at residues 1469–1504 (PSVGIFYFVSYILISWLIIVNMYIVVVMEFLNIASK). The Cytoplasmic segment spans residues 1505-1682 (KKNKTLSEDD…KEKSPIQSQI (178 aa)).

Belongs to the sodium channel (TC 1.A.1.10) family. SCN7A subfamily. As to quaternary structure, the sodium channel formed by SCN7A is probably a heterooligomeric complex consisting of the ion conducting pore forming alpha subunit SCN7A and regulatory beta subunits such as SCN3B. Interacts with ATP1A1; activates ATP1A1 and thereby indirectly signals to nearby neurons to regulate sodium homeostasis. Heart and uterus.

It is found in the cell membrane. The catalysed reaction is Na(+)(in) = Na(+)(out). Its function is as follows. Sodium leak channel functioning as an osmosensor regulating sodium ion levels in various tissues and organs. While most sodium channels are voltage-gated, SCN7A is not and lets sodium flow through membrane along its concentration gradient. In glial cells of the central nervous system, senses body-fluid sodium levels and controls salt intake behavior as well as voluntary water intake through activation of nearby neurons to maintain appropriate sodium levels in the body. By mediating sodium influx into keratinocytes, also plays a role in skin barrier homeostasis. This is Sodium channel protein type 7 subunit alpha from Homo sapiens (Human).